A 321-amino-acid chain; its full sequence is Ferredoxin--NADP reductase (321 aa).

Residues aspartate 28, glutamine 36, tyrosine 41, alanine 81, phenylalanine 115, aspartate 274, and serine 315 each contribute to the FAD site.

The protein belongs to the ferredoxin--NADP reductase type 2 family. As to quaternary structure, homodimer. FAD is required as a cofactor.

It carries out the reaction 2 reduced [2Fe-2S]-[ferredoxin] + NADP(+) + H(+) = 2 oxidized [2Fe-2S]-[ferredoxin] + NADPH. In Frankia alni (strain DSM 45986 / CECT 9034 / ACN14a), this protein is Ferredoxin--NADP reductase.